The chain runs to 459 residues: Aluminum-activated malate transporter 1 (459 aa).

At 1-52 (MDIDHGRESDGEMVGTIASCGLLLHSLLAGLGRRAAGFARKVGGAAREDPRR) the chain is on the extracellular side. 2 consecutive transmembrane segments (helical) span residues 53 to 73 (VAHS…YFVT) and 74 to 94 (PLFN…VVVM). The Extracellular segment spans residues 95 to 108 (EYTVGATLSKGLNR). The helical transmembrane segment at 109 to 129 (ALATLVAGCIAVGAHQLAELA) threads the bilayer. Topologically, residues 130 to 137 (ERCGDQGE) are cytoplasmic. The helical transmembrane segment at 138–158 (PIVLTVLVFFVASAATFLRFI) threads the bilayer. Over 159 to 160 (PE) the chain is Extracellular. The helical transmembrane segment at 161 to 181 (IKAKYDYGVTIFILTFGLVAV) threads the bilayer. Residues 182–199 (SSYRVEELIQLAHQRFYT) are Cytoplasmic-facing. Residues 200–220 (IAVGVFICLCTTVFLFPVWAG) traverse the membrane as a helical segment. Residues 221–459 (EDVHKLASGN…DEPLPDVVIL (239 aa)) lie on the Extracellular side of the membrane.

This sequence belongs to the aromatic acid exporter (TC 2.A.85) family. In terms of tissue distribution, detected in root tips.

It localises to the cell membrane. Its activity is regulated as follows. Activated by external aluminum. The enhancement of malate transport is not due to alteration in the selectivity properties but is due to an increased anion permeability. Its function is as follows. Malate transporter critical for aluminum tolerance. Permeable to chloride, nitrate, sulfate and malate. This Triticum aestivum (Wheat) protein is Aluminum-activated malate transporter 1 (ALMT1).